The sequence spans 50 residues: CGDINAPCQSDCDCCGYSVTCDCYWSKDCKCRESNFVIGMALRKAFCKNK.

5 disulfides stabilise this stretch: Cys1–Cys15, Cys8–Cys21, Cys12–Cys47, Cys14–Cys31, and Cys23–Cys29.

In terms of tissue distribution, expressed by the venom gland.

The protein localises to the secreted. Insecticidal neurotoxin that reversibly inhibits the N-methyl-D-aspartate (NMDA)-subtype of ionotropic glutamate receptor (GRIN) and inhibits inactivation of insect sodium channels (Nav). In vivo, is highly toxic to insects. The protein is U2-ctenitoxin-Pk1a of Phoneutria keyserlingi (Brazilian wandering spider).